A 591-amino-acid polypeptide reads, in one-letter code: Beta-fructofuranosidase, insoluble isoenzyme CWINV4 (591 aa).

A signal peptide spans 1 to 22 (MAISNVISVLLLLLVLINLSNQ). Substrate-binding positions include 61–64 (WIND), Gln-80, Trp-88, and 123–124 (WS). The active site involves Asp-64. Asn-145 and Asn-182 each carry an N-linked (GlcNAc...) asparagine glycan. Residues 187-188 (RD), Glu-242, and Asp-276 each bind substrate. 3 N-linked (GlcNAc...) asparagine glycosylation sites follow: Asn-336, Asn-472, and Asn-565. Cys-436 and Cys-484 are oxidised to a cystine.

It belongs to the glycosyl hydrolase 32 family. As to expression, expressed in flowers, and seeds, and, to a lower extent, in seedlings.

The protein resides in the secreted. The protein localises to the extracellular space. It localises to the apoplast. Its subcellular location is the cell wall. The catalysed reaction is Hydrolysis of terminal non-reducing beta-D-fructofuranoside residues in beta-D-fructofuranosides.. The sequence is that of Beta-fructofuranosidase, insoluble isoenzyme CWINV4 (CWINV4) from Arabidopsis thaliana (Mouse-ear cress).